The following is a 59-amino-acid chain: UPF0391 membrane protein LPC_1949 (59 aa).

2 helical membrane passes run 5–25 (ALIF…GIAV) and 30–50 (IAKI…IMGL).

The protein belongs to the UPF0391 family.

Its subcellular location is the cell membrane. The sequence is that of UPF0391 membrane protein LPC_1949 from Legionella pneumophila (strain Corby).